Consider the following 238-residue polypeptide: Lactate utilization protein A (238 aa).

The protein belongs to the LutA/YkgE family.

Is involved in L-lactate degradation and allows cells to grow with lactate as the sole carbon source. This Anoxybacillus flavithermus (strain DSM 21510 / WK1) protein is Lactate utilization protein A.